Consider the following 807-residue polypeptide: Probable phosphoketolase (807 aa).

This sequence belongs to the XFP family. Thiamine diphosphate serves as cofactor.

This chain is Probable phosphoketolase, found in Nitrosospira multiformis (strain ATCC 25196 / NCIMB 11849 / C 71).